The sequence spans 281 residues: Pantothenate synthetase (281 aa).

M30–H37 contributes to the ATP binding site. Catalysis depends on H37, which acts as the Proton donor. Residue Q61 participates in (R)-pantoate binding. Beta-alanine is bound at residue Q61. ATP is bound at residue G147 to D150. Q153 provides a ligand contact to (R)-pantoate. ATP is bound by residues L176 and S184–R187.

Belongs to the pantothenate synthetase family. As to quaternary structure, homodimer.

The protein resides in the cytoplasm. The enzyme catalyses (R)-pantoate + beta-alanine + ATP = (R)-pantothenate + AMP + diphosphate + H(+). It participates in cofactor biosynthesis; (R)-pantothenate biosynthesis; (R)-pantothenate from (R)-pantoate and beta-alanine: step 1/1. Its function is as follows. Catalyzes the condensation of pantoate with beta-alanine in an ATP-dependent reaction via a pantoyl-adenylate intermediate. This chain is Pantothenate synthetase, found in Bartonella bacilliformis (strain ATCC 35685 / KC583 / Herrer 020/F12,63).